A 399-amino-acid polypeptide reads, in one-letter code: Arginase (399 aa).

Positions 193, 216, 218, and 220 each coordinate Mn(2+). Substrate-binding positions include 218–222 (HADIN), 229–231 (SGN), and Asp-273. Mn(2+)-binding residues include Asp-322 and Asp-324. The substrate site is built by Thr-336 and Glu-367.

This sequence belongs to the arginase family. It depends on Mn(2+) as a cofactor.

Its subcellular location is the cytoplasm. The enzyme catalyses L-arginine + H2O = urea + L-ornithine. It functions in the pathway nitrogen metabolism; urea cycle; L-ornithine and urea from L-arginine: step 1/1. In Eremothecium gossypii (strain ATCC 10895 / CBS 109.51 / FGSC 9923 / NRRL Y-1056) (Yeast), this protein is Arginase (CAR1).